Consider the following 426-residue polypeptide: Chromatin structure-remodeling complex subunit SFH1 (426 aa).

Serine 78 bears the Phosphoserine mark. The segment at 201-242 (AIMIPITLDIEHMGHTIKDQFLWNYNDDSISPEEFASIYCKD) is interaction with STH1.

This sequence belongs to the SNF5 family. Interacts directly with STH1. Component of the two forms of the RSC complex composed of at least either RSC1 or RSC2, and ARP7, ARP9, LDB7, NPL6, RSC3, RSC30, RSC4, RSC58, RSC6, RSC8, RSC9, SFH1, STH1, HTL1 and probably RTT102. The complexes interact with histone and histone variant components of centromeric chromatin. Post-translationally, phosphorylated in the G1 phase.

The protein localises to the nucleus. Its function is as follows. Component of the chromatin structure-remodeling complex (RSC), which is involved in transcription regulation and nucleosome positioning. RSC is responsible for the transfer of a histone octamer from a nucleosome core particle to naked DNA. The reaction requires ATP and involves an activated RSC-nucleosome intermediate. Remodeling reaction also involves DNA translocation, DNA twist and conformational change. As a reconfigurer of centromeric and flanking nucleosomes, RSC complex is required both for proper kinetochore function in chromosome segregation and, via a PKC1-dependent signaling pathway, for organization of the cellular cytoskeleton. This subunit is essential for mitotic growth and required for cell cycle progression. This Saccharomyces cerevisiae (strain ATCC 204508 / S288c) (Baker's yeast) protein is Chromatin structure-remodeling complex subunit SFH1 (SFH1).